A 597-amino-acid chain; its full sequence is Gamma-terpinene synthase, chloroplastic (597 aa).

The N-terminal 47 residues, 1–47, are a transit peptide targeting the chloroplast; the sequence is MATLSMQVSILSKQVKNLNSFGMRASKLPMVARRVDVSTTRLRPICS. Residues D350 and D354 each contribute to the Mn(2+) site. The short motif at 350-354 is the DDXXD motif element; it reads DDVYD. Homodimerization regions lie at residues 356–362 and 428–464; these read YGTLDEL and EAKW…YFTL. Mn(2+)-binding residues include D494 and E502.

It belongs to the terpene synthase family. In terms of assembly, homodimer. Requires Mn(2+) as cofactor. It depends on Mg(2+) as a cofactor.

The protein localises to the plastid. The protein resides in the chloroplast. The enzyme catalyses (2E)-geranyl diphosphate = gamma-terpinene + diphosphate. It functions in the pathway secondary metabolite biosynthesis; terpenoid biosynthesis. Functionally, involved in the biosynthesis of phenolic monoterpenes natural products thymol and carvacrol which have a broad range of biological activities acting as antimicrobial compounds, insecticides, antioxidants and pharmaceutical agents. Monoterpene synthase which catalyzes the conversion of geranyl diphosphate (GPP) to gamma-terpinene. The sequence is that of Gamma-terpinene synthase, chloroplastic from Thymus caespititius (Cretan thyme).